We begin with the raw amino-acid sequence, 302 residues long: Pantothenate synthetase 4 (302 aa).

51-58 (MGALHEGH) serves as a coordination point for ATP. Residue histidine 58 is the Proton donor of the active site. Position 82 (glutamine 82) interacts with (R)-pantoate. A beta-alanine-binding site is contributed by glutamine 82. 166-169 (GRKD) contributes to the ATP binding site. Position 172 (glutamine 172) interacts with (R)-pantoate. ATP contacts are provided by residues alanine 195 and 203–206 (RSSR).

Belongs to the pantothenate synthetase family. In terms of assembly, homodimer.

The protein localises to the cytoplasm. It catalyses the reaction (R)-pantoate + beta-alanine + ATP = (R)-pantothenate + AMP + diphosphate + H(+). It participates in cofactor biosynthesis; (R)-pantothenate biosynthesis; (R)-pantothenate from (R)-pantoate and beta-alanine: step 1/1. Functionally, catalyzes the condensation of pantoate with beta-alanine in an ATP-dependent reaction via a pantoyl-adenylate intermediate. The polypeptide is Pantothenate synthetase 4 (Frankia alni (strain DSM 45986 / CECT 9034 / ACN14a)).